Here is a 608-residue protein sequence, read N- to C-terminus: Myosin light chain kinase 2, skeletal/cardiac muscle (608 aa).

A disordered region spans residues 1-160 (MATENGAVEL…RGSPAFLHSP (160 aa)). N-acetylalanine is present on alanine 2. Composition is skewed to basic and acidic residues over residues 31–43 (AAEK…DPEK) and 50–63 (TKQD…KKDA). The segment covering 82–91 (GSQGPAGEGG) has biased composition (gly residues). Basic and acidic residues predominate over residues 116-127 (ASEKKPEAEKGP). Phosphoserine occurs at positions 153, 159, and 161. The disordered stretch occupies residues 214 to 235 (QKEAGEKAPGQADQAKVQGDTS). The Protein kinase domain occupies 297 to 552 (MNSKEALGGG…AAQCLAHPWL (256 aa)). Residues 303 to 311 (LGGGKFGAV) and lysine 326 each bind ATP. Aspartate 418 functions as the Proton acceptor in the catalytic mechanism. At threonine 457 the chain carries Phosphothreonine. Positions 586-598 (IAVSAANRFKKIS) are calmodulin-binding.

Belongs to the protein kinase superfamily. CAMK Ser/Thr protein kinase family. As to quaternary structure, may interact with centrin.

The protein localises to the cytoplasm. The catalysed reaction is L-seryl-[myosin light chain] + ATP = O-phospho-L-seryl-[myosin light chain] + ADP + H(+). It carries out the reaction L-threonyl-[myosin light chain] + ATP = O-phospho-L-threonyl-[myosin light chain] + ADP + H(+). Functionally, implicated in the level of global muscle contraction and cardiac function. Phosphorylates a specific serine in the N-terminus of a myosin light chain. The chain is Myosin light chain kinase 2, skeletal/cardiac muscle (MYLK2) from Oryctolagus cuniculus (Rabbit).